A 246-amino-acid chain; its full sequence is Adenylate kinase 4 (246 aa).

Alanine 2 carries the N-acetylalanine modification. An ATP-binding site is contributed by 43–48; that stretch reads GSGKGT. Residues 63–92 are NMP; the sequence is STGDMLRAAVASKTPLGVKAKEAMEKGELV. Residues threonine 64, arginine 69, 90–92, 118–121, and glutamine 125 each bind AMP; these read ELV and GFPR. The tract at residues 159 to 196 is LID; it reads GRWIHPSSGRSYHTKFAPPKTPGVDDITGEPLIQRKDD. An ATP-binding site is contributed by arginine 160. 2 residues coordinate AMP: arginine 193 and arginine 204.

Belongs to the adenylate kinase family. As to quaternary structure, monomer.

It is found in the cytoplasm. The enzyme catalyses AMP + ATP = 2 ADP. Its function is as follows. Catalyzes the reversible transfer of the terminal phosphate group between ATP and AMP. Plays an important role in cellular energy homeostasis and in adenine nucleotide metabolism. The chain is Adenylate kinase 4 (ADK1) from Arabidopsis thaliana (Mouse-ear cress).